The sequence spans 434 residues: Putative magnesium transporter MRS2-D (434 aa).

Disordered regions lie at residues Met1 to Glu21, Ala126 to Ala171, and Glu279 to Gly311. The span at Ala9 to Glu21 shows a compositional bias: low complexity. The span at Glu279–Glu291 shows a compositional bias: basic and acidic residues. The next 2 helical transmembrane spans lie at Gly367–Phe387 and Phe405–Leu425.

Belongs to the CorA metal ion transporter (MIT) (TC 1.A.35.5) family.

It localises to the membrane. Its function is as follows. Putative magnesium transporter. The chain is Putative magnesium transporter MRS2-D (MRS2-D) from Oryza sativa subsp. indica (Rice).